A 358-amino-acid polypeptide reads, in one-letter code: tRNA N6-adenosine threonylcarbamoyltransferase (358 aa).

Fe cation-binding residues include His122 and His126. Residues 145-149 (LVSGG), Asp178, Gly191, and Asn287 each bind substrate. Asp315 provides a ligand contact to Fe cation.

The protein belongs to the KAE1 / TsaD family. Requires Fe(2+) as cofactor.

The protein resides in the cytoplasm. The catalysed reaction is L-threonylcarbamoyladenylate + adenosine(37) in tRNA = N(6)-L-threonylcarbamoyladenosine(37) in tRNA + AMP + H(+). In terms of biological role, required for the formation of a threonylcarbamoyl group on adenosine at position 37 (t(6)A37) in tRNAs that read codons beginning with adenine. Is involved in the transfer of the threonylcarbamoyl moiety of threonylcarbamoyl-AMP (TC-AMP) to the N6 group of A37, together with TsaE and TsaB. TsaD likely plays a direct catalytic role in this reaction. The polypeptide is tRNA N6-adenosine threonylcarbamoyltransferase (Hydrogenovibrio crunogenus (strain DSM 25203 / XCL-2) (Thiomicrospira crunogena)).